Reading from the N-terminus, the 50-residue chain is MASHHEITDHKHGEMDIRHQQATFAGFIKGATWVSILSIAVLVFLALANS.

The Cytoplasmic segment spans residues 2–17; sequence ASHHEITDHKHGEMDI. The chain crosses the membrane as a helical span at residues 18–49; it reads RHQQATFAGFIKGATWVSILSIAVLVFLALAN. S50 is a topological domain (periplasmic).

The protein localises to the cell inner membrane. The catalysed reaction is 4 Fe(II)-[cytochrome c] + O2 + 8 H(+)(in) = 4 Fe(III)-[cytochrome c] + 2 H2O + 4 H(+)(out). In terms of biological role, not required for enzymatic activity or proton pumping of the cytochrome c oxidase complex. The chain is Cytochrome c oxidase subunit 4 (ctaH) from Paracoccus denitrificans.